A 202-amino-acid chain; its full sequence is LexA repressor (202 aa).

Positions 28–48 form a DNA-binding region, H-T-H motif; sequence RAEIAQQLGFRSPNAAEEHLK. Residues Ser-119 and Lys-156 each act as for autocatalytic cleavage activity in the active site.

The protein belongs to the peptidase S24 family. As to quaternary structure, homodimer.

The enzyme catalyses Hydrolysis of Ala-|-Gly bond in repressor LexA.. Represses a number of genes involved in the response to DNA damage (SOS response), including recA and lexA. Binds to the 16 bp palindromic sequence 5'-CTGTATATATATACAG-3'. In the presence of single-stranded DNA, RecA interacts with LexA causing an autocatalytic cleavage which disrupts the DNA-binding part of LexA, leading to derepression of the SOS regulon and eventually DNA repair. The chain is LexA repressor from Pectobacterium carotovorum subsp. carotovorum (Erwinia carotovora subsp. carotovora).